The primary structure comprises 353 residues: Inositol-tetrakisphosphate 1-kinase 3 (353 aa).

Residues 1-25 are disordered; that stretch reads MKLTDNEEITMNGTREMETTEQETS. 2 residues coordinate 1D-myo-inositol 1,3,4-trisphosphate: lysine 50 and lysine 92. 2 residues coordinate ATP: arginine 127 and lysine 177. Residues 138–350 form the ATP-grasp domain; the sequence is NLSDSNGRVG…QSQCKKRALA (213 aa). 1D-myo-inositol 1,3,4-trisphosphate contacts are provided by histidine 188 and lysine 220. ATP contacts are provided by residues 209–220 and serine 235; that span reads QEFVNHGGVLFK. Mg(2+) contacts are provided by aspartate 300, aspartate 315, and asparagine 317. Position 317 (asparagine 317) interacts with 1D-myo-inositol 1,3,4-trisphosphate.

The protein belongs to the ITPK1 family. Monomer. Mg(2+) is required as a cofactor. As to expression, highly expressed in leaves and flowers, and at lower levels in roots, stems, cauline leaves and siliques.

The enzyme catalyses 1D-myo-inositol 3,4,5,6-tetrakisphosphate + ATP = 1D-myo-inositol 1,3,4,5,6-pentakisphosphate + ADP + H(+). It catalyses the reaction 1D-myo-inositol 1,3,4-trisphosphate + ATP = 1D-myo-inositol 1,3,4,5-tetrakisphosphate + ADP + H(+). The catalysed reaction is 1D-myo-inositol 1,3,4-trisphosphate + ATP = 1D-myo-inositol 1,3,4,6-tetrakisphosphate + ADP + H(+). In terms of biological role, kinase that can phosphorylate various inositol polyphosphate such as Ins(3,4,5,6)P4 or Ins(1,3,4)P3. Phosphorylates Ins(3,4,5,6)P4 to form InsP5. This reaction is thought to have regulatory importance, since Ins(3,4,5,6)P4 is an inhibitor of plasma membrane Ca(2+)-activated Cl(-) channels, while Ins(1,3,4,5,6)P5 is not. Also phosphorylates Ins(1,3,4)P3 or a racemic mixture of Ins(1,4,6)P3 and Ins(3,4,6)P3 to form InsP4. Ins(1,3,4,6)P4 is an essential molecule in the hexakisphosphate (InsP6) pathway. This is Inositol-tetrakisphosphate 1-kinase 3 (ITPK3) from Arabidopsis thaliana (Mouse-ear cress).